The following is a 256-amino-acid chain: Pimeloyl-[acyl-carrier protein] methyl ester esterase (256 aa).

Residues 15-242 (HLVLLHGWGL…AAHAPFISHP (228 aa)) enclose the AB hydrolase-1 domain. Residues W22, 82–83 (SL), and 143–147 (FLALQ) contribute to the substrate site. The active-site Nucleophile is S82. Active-site residues include D207 and H235. Residue H235 participates in substrate binding.

It belongs to the AB hydrolase superfamily. Carboxylesterase BioH family. As to quaternary structure, monomer.

The protein resides in the cytoplasm. The enzyme catalyses 6-carboxyhexanoyl-[ACP] methyl ester + H2O = 6-carboxyhexanoyl-[ACP] + methanol + H(+). It participates in cofactor biosynthesis; biotin biosynthesis. The physiological role of BioH is to remove the methyl group introduced by BioC when the pimeloyl moiety is complete. It allows to synthesize pimeloyl-ACP via the fatty acid synthetic pathway through the hydrolysis of the ester bonds of pimeloyl-ACP esters. The protein is Pimeloyl-[acyl-carrier protein] methyl ester esterase of Salmonella newport (strain SL254).